The chain runs to 363 residues: MGLIFFRYDRCYMLSVLSYLHVYFGPFRLLQSYAVLMGIALYAGFFFTYGVLPSAYRFLPQDRGRAFAPCAQEAAGKPTGAGVIFVSVFVLLVYLLMRPSFVHALILLLTWGVMLTGYLDDCAQVCWGEYRKGALDFLFAVLTAALLGHFYFHDQVFWWFPFFSDPVFVSPFLFFAGSVVILWMSINATNCTDGVDGLSGALVLMALLSMGTIFYFLLGNVRAAQYLLVPFVVDGAQWALMSFALAGALMGYVWRNAHPSTVLMGDAGSRALGFFIGVLVLISGNPFLLLMTSGVILVNGGTGLLKVVLLRFFHVRILSRVRFPLHDHMRENWHWSTAQVLLRFMILQGLLTIGLLGVLFKLR.

Transmembrane regions (helical) follow at residues 33–53, 82–102, 105–125, 133–153, 166–186, 198–218, 227–247, 271–291, 295–315, and 340–360; these read YAVL…GVLP, GVIF…PSFV, LILL…CAQV, GALD…FYFH, PVFV…WMSI, LSGA…YFLL, LLVP…ALAG, ALGF…LLLM, VILV…FFHV, and VLLR…GVLF.

It belongs to the glycosyltransferase 4 family. MraY subfamily. Mg(2+) is required as a cofactor.

Its subcellular location is the cell inner membrane. The enzyme catalyses UDP-N-acetyl-alpha-D-muramoyl-L-alanyl-gamma-D-glutamyl-meso-2,6-diaminopimeloyl-D-alanyl-D-alanine + di-trans,octa-cis-undecaprenyl phosphate = di-trans,octa-cis-undecaprenyl diphospho-N-acetyl-alpha-D-muramoyl-L-alanyl-D-glutamyl-meso-2,6-diaminopimeloyl-D-alanyl-D-alanine + UMP. The protein operates within cell wall biogenesis; peptidoglycan biosynthesis. In terms of biological role, catalyzes the initial step of the lipid cycle reactions in the biosynthesis of the cell wall peptidoglycan: transfers peptidoglycan precursor phospho-MurNAc-pentapeptide from UDP-MurNAc-pentapeptide onto the lipid carrier undecaprenyl phosphate, yielding undecaprenyl-pyrophosphoryl-MurNAc-pentapeptide, known as lipid I. The sequence is that of Phospho-N-acetylmuramoyl-pentapeptide-transferase from Treponema pallidum (strain Nichols).